The primary structure comprises 743 residues: Phosphoribosylformylglycinamidine synthase subunit PurL (743 aa).

The active site involves His-50. Residues Tyr-53 and Lys-92 each contribute to the ATP site. Residue Glu-94 coordinates Mg(2+). Substrate contacts are provided by residues 95–98 (SHNH) and Arg-117. His-96 (proton acceptor) is an active-site residue. Asp-118 provides a ligand contact to Mg(2+). Residue Gln-241 coordinates substrate. Asp-269 contacts Mg(2+). 313-315 (ESQ) lines the substrate pocket. Residues Asp-495 and Gly-532 each contribute to the ATP site. A Mg(2+)-binding site is contributed by Asn-533. Ser-535 contacts substrate.

It belongs to the FGAMS family. In terms of assembly, monomer. Part of the FGAM synthase complex composed of 1 PurL, 1 PurQ and 2 PurS subunits.

It is found in the cytoplasm. It catalyses the reaction N(2)-formyl-N(1)-(5-phospho-beta-D-ribosyl)glycinamide + L-glutamine + ATP + H2O = 2-formamido-N(1)-(5-O-phospho-beta-D-ribosyl)acetamidine + L-glutamate + ADP + phosphate + H(+). The protein operates within purine metabolism; IMP biosynthesis via de novo pathway; 5-amino-1-(5-phospho-D-ribosyl)imidazole from N(2)-formyl-N(1)-(5-phospho-D-ribosyl)glycinamide: step 1/2. Functionally, part of the phosphoribosylformylglycinamidine synthase complex involved in the purines biosynthetic pathway. Catalyzes the ATP-dependent conversion of formylglycinamide ribonucleotide (FGAR) and glutamine to yield formylglycinamidine ribonucleotide (FGAM) and glutamate. The FGAM synthase complex is composed of three subunits. PurQ produces an ammonia molecule by converting glutamine to glutamate. PurL transfers the ammonia molecule to FGAR to form FGAM in an ATP-dependent manner. PurS interacts with PurQ and PurL and is thought to assist in the transfer of the ammonia molecule from PurQ to PurL. The sequence is that of Phosphoribosylformylglycinamidine synthase subunit PurL from Rhizobium etli (strain CIAT 652).